We begin with the raw amino-acid sequence, 87 residues long: NADH dehydrogenase [ubiquinone] 1 alpha subcomplex subunit 4-like 2 (87 aa).

Belongs to the complex I NDUFA4 subunit family.

In Mus musculus (Mouse), this protein is NADH dehydrogenase [ubiquinone] 1 alpha subcomplex subunit 4-like 2 (Ndufa4l2).